We begin with the raw amino-acid sequence, 205 residues long: Proteasome subunit beta type-3 (205 aa).

Position 2 is an N-acetylserine (Ser2). Lys77 carries the N6-acetyllysine modification.

Belongs to the peptidase T1B family. The 26S proteasome consists of a 20S proteasome core and two 19S regulatory subunits. The 20S proteasome core is a barrel-shaped complex made of 28 subunits that are arranged in four stacked rings. The two outer rings are each formed by seven alpha subunits, and the two inner rings are formed by seven beta subunits. The proteolytic activity is exerted by three beta-subunits PSMB5, PSMB6 and PSMB7.

The protein localises to the cytoplasm. Its subcellular location is the nucleus. In terms of biological role, non-catalytic component of the 20S core proteasome complex involved in the proteolytic degradation of most intracellular proteins. This complex plays numerous essential roles within the cell by associating with different regulatory particles. Associated with two 19S regulatory particles, forms the 26S proteasome and thus participates in the ATP-dependent degradation of ubiquitinated proteins. The 26S proteasome plays a key role in the maintenance of protein homeostasis by removing misfolded or damaged proteins that could impair cellular functions, and by removing proteins whose functions are no longer required. Associated with the PA200 or PA28, the 20S proteasome mediates ubiquitin-independent protein degradation. This type of proteolysis is required in several pathways including spermatogenesis (20S-PA200 complex) or generation of a subset of MHC class I-presented antigenic peptides (20S-PA28 complex). In Rattus norvegicus (Rat), this protein is Proteasome subunit beta type-3 (Psmb3).